Consider the following 334-residue polypeptide: Malate dehydrogenase, cytoplasmic (334 aa).

11-17 serves as a coordination point for NAD(+); sequence GAAGQIA. 2 residues coordinate substrate: arginine 92 and arginine 98. Residues asparagine 105, glutamine 112, and 129–131 contribute to the NAD(+) site; that span reads VGN. The substrate site is built by asparagine 131 and arginine 162. The active-site Proton acceptor is histidine 187.

The protein belongs to the LDH/MDH superfamily. MDH type 2 family. In terms of assembly, homodimer.

It is found in the cytoplasm. The protein localises to the cytosol. The catalysed reaction is (S)-malate + NAD(+) = oxaloacetate + NADH + H(+). It carries out the reaction (S)-2-hydroxyglutarate + NAD(+) = 2-oxoglutarate + NADH + H(+). Functionally, catalyzes the reduction of aromatic alpha-keto acids in the presence of NADH. Plays essential roles in the malate-aspartate shuttle and the tricarboxylic acid cycle, important in mitochondrial NADH supply for oxidative phosphorylation. Catalyzes the reduction of 2-oxoglutarate to 2-hydroxyglutarate, leading to elevated reactive oxygen species (ROS). The sequence is that of Malate dehydrogenase, cytoplasmic (MDH1) from Gallus gallus (Chicken).